The chain runs to 253 residues: Sulfate transporter CysZ (253 aa).

Helical transmembrane passes span 31–51 (FVIL…WWLF), 75–95 (LLWP…FSTI), 151–171 (IVLL…PVLW), and 222–242 (IPLL…AMWV).

It belongs to the CysZ family.

The protein localises to the cell inner membrane. Functionally, high affinity, high specificity proton-dependent sulfate transporter, which mediates sulfate uptake. Provides the sulfur source for the cysteine synthesis pathway. In Escherichia coli O81 (strain ED1a), this protein is Sulfate transporter CysZ.